Reading from the N-terminus, the 43-residue chain is uncharacterized protein (43 aa).

This is an uncharacterized protein from Bacillus subtilis (strain 168).